The chain runs to 1553 residues: MAPTPLPLEQMPGVGGGGGGYLPAAQEGGPRINTMSMSVLIDFIIQRTYHELTVLAELLPRKTDMERKVEIYNYAARTRHLFTRLNALVKWGNSVSKVDKSSQIMSFLDKQNMLFVETADMLARMSRETLVRARLPNFHIPAAVEVLTTGTYNRLPTCIRERIVPADAITPAEKRQTLLRLNQVIQHRLVTGKLLPQMREFRIRNGRVTFEVKHEFSVSLTVMGDNPTVPWRLLDIDVLVEDKETGDGKSLVHPLQVNYIHQLIQARLVENPNALSEVYNCLHYFCQSLQLEVLYTQTLRLNYERLDDNNITVEEYVPGVKLTVSYWRDLKSELGYRLTVQSDPSEIGRPLAVVHVPSLGAKESAEVADRAVRSEHLSMERLIVHTVYIRSVSRLSDLKLEFQAFLKDVDFNLQGTPAILTVPVLSPCLRAEQIHITIDTHTGMFRCHVPKHLDCPIMEEMQDCLNGDRSKLPALLSELRFWITHRRCDKTLQHLPATATETLPFLVQPDQEILQPGRHKIYVKLHRHPNIVLVVQLKEKTTMPNEMEYTFHLGFVAYQKDELDVIDDSAMQLVSIVAQPHSDIPKCYTKLMRLIEFDTFVATHGPGTEVDAEVSPHKRKSNGDLLAPPAKQQKTIFPAYFIPELAHVVAMCDEKIPFMNLAQTLSKHNIPHSGLQVEANATSLVLKILALPQPGKTTFATQQQQQQGAPAVAGENKPSGTSGLPKIDSHVWDDLMRRVLSISIRSQTNKNSQVRIWVVEFVFYSTPLQSSHPKEQGSRRTVYLTYEQANYDFSKTVEDLLNDWSKIVYLYTLVYDFAEQLLNKRLSLCDMLVVKSYSYMNLLLGYGPKKEVSCNIYWSVQSHGFRLTFVGGMSAVNGHSMMRDQLAQHLNQQHSITQIAQILHETYNPLSSIAKLPVLPFLGIPRPQVPVLSFCVLAQSPCLIRLTYQAVYCLELRFRANRLVSIRDGASSRFERNVVEEFTPIQGLKAFLSKYVDESAVYRGRASHEDDNPLSPMGMEDNFGGPSSVAGVSAGGSSPFLGTGMRGPQSPRDSGLRFPAPHTPPSSSNPHTPASPHPSAGAGGGSGPQGHGNFNLTSPPAPHMPHPSPSGLMPSSPLNPQPSPHMVHSPGPNTLYMQSHQDSPFTAMSPANNNWPGSPSMPRPSPRPGQSPDHKSTGGGAGVAGGTDRGGSRGTLNRPWAGAVPTLLTHEALETLCRPSPYPNKDINVPDMSPLERFLGCVYMRRQLHRNIQSEETLTALNSTEPGVVLFKVDGLQCQVVLNQMHMQTLHLKVSQLPPMPDKHPPPFQLSQDDLLVIEQYFDTRVAAPPYRPNSLHSICRLLNLPAQVLKDFVQIMRLDLKPELGGDQLKWTVQICLRMPPSAVPIVPSGNACVVMGRMKILFFLQITRIPYGAVIGVGKDWKDSPSLVLPIVYDIQTNVTQLAERTGQVISPTMTAASTLLRRFAEFNAQQNQCTLFPAITDLLTNLQLAAEMPQPPPNQSIGPPVGVGVGVGSSPNPMMPMQQLPQQVGPQGPVGPGGYPQMGPNPGGPQ.

2 short sequence motifs (LXXLL motif) span residues Leu55 to Leu59 and Leu472 to Leu476. Ser615 carries the phosphoserine modification. Disordered stretches follow at residues Phe699 to Gly723, Ala1006 to Pro1199, and Gly1513 to Gln1553. Residue Ser1015 is modified to Phosphoserine. 2 stretches are compositionally biased toward low complexity: residues Gly1024 to Pro1039 and Pro1065 to Ala1080. Residues Gly1081–Gly1090 are compositionally biased toward gly residues. Pro residues predominate over residues Pro1099–Ser1108. The span at Gly1131 to Trp1155 shows a compositional bias: polar residues. Residues Pro1159 to Gly1169 show a composition bias toward pro residues. A compositionally biased stretch (gly residues) spans Thr1177 to Arg1193. Over residues Gly1515–Gln1534 the composition is skewed to low complexity.

The protein belongs to the Mediator complex subunit 14 family. In terms of assembly, component of the Mediator complex, which may include CDK8, MED4, MED6, MED11, MED14, MED17, MED18, MED20, MED21, MED22, MED27, MED28, MED30 and MED31.

Its subcellular location is the nucleus. Functionally, component of the Mediator complex, a coactivator involved in the regulated transcription of nearly all RNA polymerase II-dependent genes. Mediator functions as a bridge to convey information from gene-specific regulatory proteins to the basal RNA polymerase II transcription machinery. Mediator is recruited to promoters by direct interactions with regulatory proteins and serves as a scaffold for the assembly of a functional pre-initiation complex with RNA polymerase II and the general transcription factors. Required for activated transcription of the MtnA, MtnB and MtnD genes. In Drosophila melanogaster (Fruit fly), this protein is Mediator of RNA polymerase II transcription subunit 14 (MED14).